Here is a 762-residue protein sequence, read N- to C-terminus: uncharacterized protein (762 aa).

Positions 734–762 (QQRPRVAAAAPPPPPQPPAAAVPTTQAST) are disordered. Residues 743–753 (APPPPPQPPAA) show a composition bias toward pro residues.

This is an uncharacterized protein from Ostreid herpesvirus 1 (isolate France) (OsHV-1).